A 231-amino-acid polypeptide reads, in one-letter code: Orotidine 5'-phosphate decarboxylase (231 aa).

Substrate is bound by residues D12, K34, 61 to 70 (DLKFHDIPNT), T120, R181, Q190, G210, and R211. K63 functions as the Proton donor in the catalytic mechanism.

It belongs to the OMP decarboxylase family. Type 1 subfamily. As to quaternary structure, homodimer.

The enzyme catalyses orotidine 5'-phosphate + H(+) = UMP + CO2. The protein operates within pyrimidine metabolism; UMP biosynthesis via de novo pathway; UMP from orotate: step 2/2. In terms of biological role, catalyzes the decarboxylation of orotidine 5'-monophosphate (OMP) to uridine 5'-monophosphate (UMP). The chain is Orotidine 5'-phosphate decarboxylase from Alcanivorax borkumensis (strain ATCC 700651 / DSM 11573 / NCIMB 13689 / SK2).